The following is a 313-amino-acid chain: MNDQVEAFLRHLADERNLAANTIAAYRTDLDQFCDFVSARNRREWRDVSHDDILSFMLYLRERRYASSTVARRVAAVKSFFAFLTGSGAVPHDPTERIDSPKVDRDLPRALTPHQVDELLELPLRSPTPERIRDKAMLELLYATGMRVSELVALNMTDIDLVHSTVRCTGKNGRVRVLPINGSAATALEEYCDNSRSQLARGSDAPIDALFLNHRGKRLTRQGFWLILKQYAEEMGLGELTPHMLRHSFAVHMLNAGADLRAVQELLGHTSISTTQIYTHINHASSAQPVRSEPRATEVNGVINEQALVPEEK.

Positions methionine 1 to threonine 85 constitute a Core-binding (CB) domain. The Tyr recombinase domain occupies aspartate 106–arginine 291. Active-site residues include arginine 147, lysine 171, histidine 243, arginine 246, and histidine 269. Residue tyrosine 278 is the O-(3'-phospho-DNA)-tyrosine intermediate of the active site.

Belongs to the 'phage' integrase family. XerC subfamily. Forms a cyclic heterotetrameric complex composed of two molecules of XerC and two molecules of XerD.

The protein resides in the cytoplasm. Its function is as follows. Site-specific tyrosine recombinase, which acts by catalyzing the cutting and rejoining of the recombining DNA molecules. The XerC-XerD complex is essential to convert dimers of the bacterial chromosome into monomers to permit their segregation at cell division. It also contributes to the segregational stability of plasmids. The protein is Tyrosine recombinase XerC of Roseiflexus sp. (strain RS-1).